We begin with the raw amino-acid sequence, 98 residues long: Serine protease inhibitor Kazal-type 14 (98 aa).

The first 23 residues, 1–23 (MVKYFQVLWSLLFSIMLHSMLLA), serve as a signal peptide directing secretion. A Kazal-like domain is found at 35-98 (GLIKIKCPYK…QIRYYHTGRC (64 aa)). 3 disulfide bridges follow: Cys41/Cys80, Cys58/Cys77, and Cys66/Cys98. Asn52 carries an N-linked (GlcNAc...) asparagine glycan.

It localises to the secreted. Functionally, may be a serine protease inhibitor. The chain is Serine protease inhibitor Kazal-type 14 (Spink14) from Rattus norvegicus (Rat).